We begin with the raw amino-acid sequence, 449 residues long: TNF receptor-associated factor family protein DDB_G0272340 (449 aa).

The segment at 33–76 (CPICEECIMDVNKCEALQCKEGHVHCRLCWMKSLESKKECMTCR) adopts an RING-type; degenerate zinc-finger fold. TRAF-type zinc fingers lie at residues 133-187 (GHIK…IDDS) and 189-251 (VHYS…SELS). Residues 263-309 (MEATIDQHICKFEKSEKEYKKLELEYNRLKDDFKILQSELKVIRELK) are a coiled coil. Residues 311–437 (NYQNKWVITN…QNSVTLNINI (127 aa)) form the MATH domain.

This sequence belongs to the TNF receptor-associated factor family. A subfamily.

It is found in the cytoplasm. In terms of biological role, probable adapter protein and signal transducer that links members of the tumor necrosis factor receptor family to different signaling pathways by association with the receptor cytoplasmic domain and kinases. This Dictyostelium discoideum (Social amoeba) protein is TNF receptor-associated factor family protein DDB_G0272340.